Reading from the N-terminus, the 313-residue chain is MVLSQKLHEAFKGTVERITGPRTISAFKEKGVLSVSEFVLAGDNLVSKCPTWSWESGDASKRKPYLPSDKQFLITRNVPCLRRAASVAEDYEAAGGEVLVDDEDNDGWLATHGKPKDKGKEEDNLPSMDALDINEKNTIQSIPTYFGGEEDDDIPDMEEFDEADNVVENDPATLQSTYLVAHEPDDDNILRTRTYDLSITYDKYYQTPRVWLTGYDESRMLLQPELVMEDVSQDHARKTVTIEDHPHLPGKHASVHPCRHGAVMKKIIDVLMSRGVEPEVDKYLFLFLKFMASVIPTIEYDYTMDFDLGSSST.

Residues 103–125 (EDNDGWLATHGKPKDKGKEEDNL) are disordered. The span at 114-123 (KPKDKGKEED) shows a compositional bias: basic and acidic residues. The active-site Glycyl thioester intermediate is the Cys258.

The protein belongs to the ATG3 family. Interacts with ATG8 through an intermediate thioester bond between Cys-258 and the C-terminal Gly of ATG8. Also interacts with the C-terminal region of the E1-like ATG7 enzyme.

The protein localises to the cytoplasm. Functionally, E2 conjugating enzyme responsible for the E2-like covalent binding of phosphatidylethanolamine to the C-terminal Gly of ATG8. This step is required for the membrane association of ATG8. The formation of the ATG8-phosphatidylethanolamine conjugate is essential for autophagy and for the cytoplasm to vacuole transport (Cvt). This is Autophagy-related protein 3 (ATG3) from Arabidopsis thaliana (Mouse-ear cress).